A 424-amino-acid polypeptide reads, in one-letter code: 3-oxo-tetronate kinase (424 aa).

Residues serine 260, 364-367 (GGET), and glycine 407 contribute to the ATP site.

This sequence belongs to the four-carbon acid sugar kinase family.

It carries out the reaction 3-dehydro-L-erythronate + ATP = 3-dehydro-4-O-phospho-L-erythronate + ADP + H(+). The catalysed reaction is 3-dehydro-D-erythronate + ATP = 3-dehydro-4-O-phospho-D-erythronate + ADP + H(+). In terms of biological role, catalyzes the ATP-dependent phosphorylation of 3-oxo-tetronate to 3-oxo-tetronate 4-phosphate. The protein is 3-oxo-tetronate kinase of Pectobacterium atrosepticum (strain SCRI 1043 / ATCC BAA-672) (Erwinia carotovora subsp. atroseptica).